Reading from the N-terminus, the 232-residue chain is 5'-methylthioadenosine/S-adenosylhomocysteine nucleosidase (232 aa).

Glutamate 12 (proton acceptor) is an active-site residue. Substrate is bound by residues glycine 78, isoleucine 152, and 173–174 (ME). Aspartate 197 functions as the Proton donor in the catalytic mechanism.

This sequence belongs to the PNP/UDP phosphorylase family. MtnN subfamily. As to quaternary structure, homodimer.

It carries out the reaction S-adenosyl-L-homocysteine + H2O = S-(5-deoxy-D-ribos-5-yl)-L-homocysteine + adenine. It catalyses the reaction S-methyl-5'-thioadenosine + H2O = 5-(methylsulfanyl)-D-ribose + adenine. The enzyme catalyses 5'-deoxyadenosine + H2O = 5-deoxy-D-ribose + adenine. It participates in amino-acid biosynthesis; L-methionine biosynthesis via salvage pathway; S-methyl-5-thio-alpha-D-ribose 1-phosphate from S-methyl-5'-thioadenosine (hydrolase route): step 1/2. Its function is as follows. Catalyzes the irreversible cleavage of the glycosidic bond in both 5'-methylthioadenosine (MTA) and S-adenosylhomocysteine (SAH/AdoHcy) to adenine and the corresponding thioribose, 5'-methylthioribose and S-ribosylhomocysteine, respectively. Also cleaves 5'-deoxyadenosine, a toxic by-product of radical S-adenosylmethionine (SAM) enzymes, into 5-deoxyribose and adenine. Thus, is required for in vivo function of the radical SAM enzymes biotin synthase and lipoic acid synthase, that are inhibited by 5'-deoxyadenosine accumulation. The chain is 5'-methylthioadenosine/S-adenosylhomocysteine nucleosidase from Erwinia tasmaniensis (strain DSM 17950 / CFBP 7177 / CIP 109463 / NCPPB 4357 / Et1/99).